Consider the following 152-residue polypeptide: Deoxyuridine 5'-triphosphate nucleotidohydrolase (152 aa).

Residues 63-65 (RSG), Asn-76, and 80-82 (TID) contribute to the substrate site. The disordered stretch occupies residues 129–152 (LDDTERGQGGYGSTGVSAMPPVDG).

This sequence belongs to the dUTPase family. Mg(2+) serves as cofactor.

The catalysed reaction is dUTP + H2O = dUMP + diphosphate + H(+). The protein operates within pyrimidine metabolism; dUMP biosynthesis; dUMP from dCTP (dUTP route): step 2/2. This enzyme is involved in nucleotide metabolism: it produces dUMP, the immediate precursor of thymidine nucleotides and it decreases the intracellular concentration of dUTP so that uracil cannot be incorporated into DNA. In Cutibacterium acnes (strain DSM 16379 / KPA171202) (Propionibacterium acnes), this protein is Deoxyuridine 5'-triphosphate nucleotidohydrolase.